The primary structure comprises 425 residues: Protein disulfide isomerase-like 5-3 (425 aa).

The N-terminal stretch at 1–28 (MGKPTLPPVVVVVVLLLLVVVLPATTCG) is a signal peptide. In terms of domain architecture, Thioredoxin spans 29–153 (ADAGGGGEAE…LVENLKKLVA (125 aa)). Active-site nucleophile residues include C75 and C78. C75 and C78 are disulfide-bonded. Residues 386–406 (LLGVNAVYILVFLVAVLVLLM) form a helical membrane-spanning segment.

It belongs to the protein disulfide isomerase family.

The protein resides in the membrane. Its function is as follows. Acts as a protein-folding catalyst that interacts with nascent polypeptides to catalyze the formation, isomerization, and reduction or oxidation of disulfide bonds. May play a role in storage protein biogenesis. This Oryza sativa subsp. japonica (Rice) protein is Protein disulfide isomerase-like 5-3 (PDIL5-3).